The following is a 277-amino-acid chain: Large ribosomal subunit protein uL2 (277 aa).

Residues 225-277 (MNPIDHPHGGGEGKTAAGRHPVSPWGTPSKGFRTRVNKRTDGMIVRRRYSNKG) are disordered.

This sequence belongs to the universal ribosomal protein uL2 family. Part of the 50S ribosomal subunit. Forms a bridge to the 30S subunit in the 70S ribosome.

Functionally, one of the primary rRNA binding proteins. Required for association of the 30S and 50S subunits to form the 70S ribosome, for tRNA binding and peptide bond formation. It has been suggested to have peptidyltransferase activity; this is somewhat controversial. Makes several contacts with the 16S rRNA in the 70S ribosome. The chain is Large ribosomal subunit protein uL2 from Nitrosospira multiformis (strain ATCC 25196 / NCIMB 11849 / C 71).